A 616-amino-acid polypeptide reads, in one-letter code: Dihydroxy-acid dehydratase (616 aa).

A Mg(2+)-binding site is contributed by aspartate 81. Cysteine 122 is a [2Fe-2S] cluster binding site. Positions 123 and 124 each coordinate Mg(2+). Lysine 124 is subject to N6-carboxylysine. Position 195 (cysteine 195) interacts with [2Fe-2S] cluster. Residue glutamate 491 participates in Mg(2+) binding. The Proton acceptor role is filled by serine 517.

Belongs to the IlvD/Edd family. In terms of assembly, homodimer. It depends on [2Fe-2S] cluster as a cofactor. Mg(2+) serves as cofactor.

The catalysed reaction is (2R)-2,3-dihydroxy-3-methylbutanoate = 3-methyl-2-oxobutanoate + H2O. The enzyme catalyses (2R,3R)-2,3-dihydroxy-3-methylpentanoate = (S)-3-methyl-2-oxopentanoate + H2O. It participates in amino-acid biosynthesis; L-isoleucine biosynthesis; L-isoleucine from 2-oxobutanoate: step 3/4. Its pathway is amino-acid biosynthesis; L-valine biosynthesis; L-valine from pyruvate: step 3/4. Functions in the biosynthesis of branched-chain amino acids. Catalyzes the dehydration of (2R,3R)-2,3-dihydroxy-3-methylpentanoate (2,3-dihydroxy-3-methylvalerate) into 2-oxo-3-methylpentanoate (2-oxo-3-methylvalerate) and of (2R)-2,3-dihydroxy-3-methylbutanoate (2,3-dihydroxyisovalerate) into 2-oxo-3-methylbutanoate (2-oxoisovalerate), the penultimate precursor to L-isoleucine and L-valine, respectively. This is Dihydroxy-acid dehydratase from Escherichia coli O81 (strain ED1a).